A 623-amino-acid polypeptide reads, in one-letter code: DNA-directed RNA polymerase subunit gamma (623 aa).

4 residues coordinate Zn(2+): Cys-70, Cys-72, Cys-85, and Cys-88. Residues Asp-466, Asp-468, and Asp-470 each contribute to the Mg(2+) site.

This sequence belongs to the RNA polymerase beta' chain family. RpoC1 subfamily. In terms of assembly, in cyanobacteria the RNAP catalytic core is composed of 2 alpha, 1 beta, 1 beta', 1 gamma and 1 omega subunit. When a sigma factor is associated with the core the holoenzyme is formed, which can initiate transcription. It depends on Mg(2+) as a cofactor. The cofactor is Zn(2+).

The enzyme catalyses RNA(n) + a ribonucleoside 5'-triphosphate = RNA(n+1) + diphosphate. In terms of biological role, DNA-dependent RNA polymerase catalyzes the transcription of DNA into RNA using the four ribonucleoside triphosphates as substrates. This chain is DNA-directed RNA polymerase subunit gamma, found in Acaryochloris marina (strain MBIC 11017).